The sequence spans 85 residues: UPF0512 protein U (85 aa).

It belongs to the UPF0512 family.

This is UPF0512 protein U from Dictyostelium discoideum (Social amoeba).